The chain runs to 339 residues: Bifunctional phosphoglucose/phosphomannose isomerase (339 aa).

The SIS domain occupies 22–164; sequence ISVNVKAEDI…IEPVDDQIEE (143 aa). D-fructose 6-phosphate-binding residues include Gly41, Ser42, Ser83, Ser85, Thr88, and Arg135. The active-site Proton acceptor is Glu221. Residues His237 and Lys331 each contribute to the D-fructose 6-phosphate site. His237 (proton donor) is an active-site residue. Lys331 (proton acceptor) is an active-site residue.

Belongs to the PGI/PMI family. In terms of assembly, homodimer.

The enzyme catalyses alpha-D-glucose 6-phosphate = beta-D-fructose 6-phosphate. The catalysed reaction is D-mannose 6-phosphate = D-fructose 6-phosphate. Its function is as follows. Dual specificity isomerase that catalyzes the isomerization of both glucose-6-phosphate and mannose-6-phosphate to fructose-6-phosphate. The chain is Bifunctional phosphoglucose/phosphomannose isomerase from Caldicellulosiruptor bescii (strain ATCC BAA-1888 / DSM 6725 / KCTC 15123 / Z-1320) (Anaerocellum thermophilum).